We begin with the raw amino-acid sequence, 922 residues long: Lysine-specific demethylase 7A (922 aa).

The PHD-type zinc finger occupies 6–57 (PVYCVCRQPYDVSRFMIECDICKDWFHSSCVKVEEHQAADIDLYHCPNCEVL). The region spanning 199 to 355 (FSDTKMADLV…MQLRCYEMEK (157 aa)) is the JmjC domain. Thr248 provides a ligand contact to substrate. Positions 251 and 253 each coordinate Fe cation. Lys268 is a binding site for substrate. His323 provides a ligand contact to Fe cation. 5 disordered regions span residues 445–490 (EEEG…TKTP), 565–607 (RSLY…TQKP), 622–711 (GSSE…EQEA), 754–773 (GKEHLDSHSHKAANSDHHVK), and 872–902 (LHPTKRPASNPPPISNQATKGKRPKKGMATA). Positions 473–483 (HHSGRKARRLR) are enriched in basic residues. The span at 648–666 (ESESSGDDDDEEEEEEEER) shows a compositional bias: acidic residues. Basic and acidic residues-rich tracts occupy residues 667–683 (QEPIRNLKEEHSGRRLP) and 691–701 (PDHDSPQKREC).

This sequence belongs to the JHDM1 histone demethylase family. JHDM1D subfamily. The cofactor is Fe(2+).

Its subcellular location is the nucleus. Histone demethylase required for brain development. Specifically demethylates dimethylated 'Lys-9' and 'Lys-27' (H3K9me2 and H3K27me2, respectively) of histone H3 and monomethylated histone H4 'Lys-20' residue (H4K20Me1), thereby playing a central role in histone code. The sequence is that of Lysine-specific demethylase 7A (kdm7a) from Xenopus tropicalis (Western clawed frog).